The sequence spans 274 residues: Large ribosomal subunit protein uL2cz/uL2cy (274 aa).

The interval 224–253 is disordered; it reads NPIDHPHGGGEGRAPIGRKKPTTPWGYPAL.

The protein belongs to the universal ribosomal protein uL2 family. As to quaternary structure, part of the 50S ribosomal subunit.

It localises to the plastid. The polypeptide is Large ribosomal subunit protein uL2cz/uL2cy (rpl2-A) (Epifagus virginiana (Beechdrops)).